Consider the following 492-residue polypeptide: Probable malate:quinone oxidoreductase (492 aa).

The protein belongs to the MQO family. It depends on FAD as a cofactor.

It catalyses the reaction (S)-malate + a quinone = a quinol + oxaloacetate. It functions in the pathway carbohydrate metabolism; tricarboxylic acid cycle; oxaloacetate from (S)-malate (quinone route): step 1/1. This is Probable malate:quinone oxidoreductase from Methylobacillus flagellatus (strain ATCC 51484 / DSM 6875 / VKM B-1610 / KT).